The primary structure comprises 280 residues: Putative pyruvate, phosphate dikinase regulatory protein (280 aa).

Residue 154–161 (GVSRTSKT) participates in ADP binding.

It belongs to the pyruvate, phosphate/water dikinase regulatory protein family. PDRP subfamily.

The enzyme catalyses N(tele)-phospho-L-histidyl/L-threonyl-[pyruvate, phosphate dikinase] + ADP = N(tele)-phospho-L-histidyl/O-phospho-L-threonyl-[pyruvate, phosphate dikinase] + AMP + H(+). It catalyses the reaction N(tele)-phospho-L-histidyl/O-phospho-L-threonyl-[pyruvate, phosphate dikinase] + phosphate + H(+) = N(tele)-phospho-L-histidyl/L-threonyl-[pyruvate, phosphate dikinase] + diphosphate. In terms of biological role, bifunctional serine/threonine kinase and phosphorylase involved in the regulation of the pyruvate, phosphate dikinase (PPDK) by catalyzing its phosphorylation/dephosphorylation. The polypeptide is Putative pyruvate, phosphate dikinase regulatory protein (Nitrobacter hamburgensis (strain DSM 10229 / NCIMB 13809 / X14)).